The chain runs to 447 residues: Teichoic acids export ATP-binding protein TagH (447 aa).

The 223-residue stretch at 24–246 (DKLKTLFSVF…YRAFLHRYNH (223 aa)) folds into the ABC transporter domain. 60–67 (GLNGSGKS) contacts ATP. Residues 247-447 (FTEPQKESYQ…QVLKLKEVTE (201 aa)) are unknown. The segment at 359-393 (NAVKTTKTKPASTKESRQQEEVQPSPTNVPENNNS) is disordered. Polar residues-rich tracts occupy residues 360–369 (AVKTTKTKPA) and 379–393 (EVQP…NNNS). Positions 398–442 (STYTVEVGDSVSLIAENHGLTIEQLQTLNPEIIEVPIYPGQVLKL) constitute a LysM domain.

The protein belongs to the ABC transporter superfamily. Teichoic acids exporter (TC 3.A.1.104.1) family. In terms of assembly, the complex is composed of two ATP-binding proteins (TagH) and two transmembrane proteins (TagG).

The protein resides in the cell membrane. It catalyses the reaction ATP + H2O + teichoic acidSide 1 = ADP + phosphate + teichoic acidSide 2.. Functionally, part of the ABC transporter complex TagGH involved in teichoic acids export. Responsible for energy coupling to the transport system. The sequence is that of Teichoic acids export ATP-binding protein TagH from Enterococcus faecalis (strain ATCC 700802 / V583).